A 302-amino-acid polypeptide reads, in one-letter code: Probable protein ABIL4 (302 aa).

2 disordered regions span residues P151–A179 and L220–F256. Residues A161–D170 show a composition bias toward polar residues.

It belongs to the ABI family. In terms of assembly, binds SCAR.

The protein localises to the cytoplasm. It is found in the cytoskeleton. Involved in regulation of actin and microtubule organization. Part of a WAVE complex that activates the Arp2/3 complex. This is Probable protein ABIL4 from Oryza sativa subsp. japonica (Rice).